The primary structure comprises 599 residues: Elongation factor 4 (599 aa).

Positions 4-186 constitute a tr-type G domain; the sequence is KYIRNFSIIA…AIVEKVPPPK (183 aa). GTP is bound by residues 16–21 and 133–136; these read DHGKST and NKID.

It belongs to the TRAFAC class translation factor GTPase superfamily. Classic translation factor GTPase family. LepA subfamily.

It is found in the cell inner membrane. The enzyme catalyses GTP + H2O = GDP + phosphate + H(+). Functionally, required for accurate and efficient protein synthesis under certain stress conditions. May act as a fidelity factor of the translation reaction, by catalyzing a one-codon backward translocation of tRNAs on improperly translocated ribosomes. Back-translocation proceeds from a post-translocation (POST) complex to a pre-translocation (PRE) complex, thus giving elongation factor G a second chance to translocate the tRNAs correctly. Binds to ribosomes in a GTP-dependent manner. This is Elongation factor 4 from Bdellovibrio bacteriovorus (strain ATCC 15356 / DSM 50701 / NCIMB 9529 / HD100).